The chain runs to 219 residues: Protein Ac132 (219 aa).

The segment at 1-34 (MSDKTPTKKGGSHAMTLRERGVTKPPKKSEKLQQ) is disordered. Basic and acidic residues predominate over residues 16–33 (TLRERGVTKPPKKSEKLQ). The tract at residues 103–134 (YPMAYFVNTDYKLKLECARIRSDLLYKNKNEV) is NEBU-like domain.

Interacts with viral envelope protein E18 and the DNA-binding protein p6.9.

It localises to the host cytoplasm. The protein resides in the host nucleus. It is found in the virion. In terms of biological role, plays an essential role in nucleocapsid entry in host nucleus. May act by binding and stabilizing F-actin in the infected cell, which might attach to nucleocapsids and then push the nucleocapsids into the nucleus. This Autographa californica nuclear polyhedrosis virus (AcMNPV) protein is Protein Ac132 (Ac132).